The sequence spans 356 residues: tRNA N6-adenosine threonylcarbamoyltransferase (356 aa).

Fe cation-binding residues include H115 and H119. Substrate contacts are provided by residues 138-142 (LVSGG), D171, G184, and N283. D311 serves as a coordination point for Fe cation.

The protein belongs to the KAE1 / TsaD family. It depends on Fe(2+) as a cofactor.

It localises to the cytoplasm. The catalysed reaction is L-threonylcarbamoyladenylate + adenosine(37) in tRNA = N(6)-L-threonylcarbamoyladenosine(37) in tRNA + AMP + H(+). Required for the formation of a threonylcarbamoyl group on adenosine at position 37 (t(6)A37) in tRNAs that read codons beginning with adenine. Is involved in the transfer of the threonylcarbamoyl moiety of threonylcarbamoyl-AMP (TC-AMP) to the N6 group of A37, together with TsaE and TsaB. TsaD likely plays a direct catalytic role in this reaction. In Prochlorococcus marinus (strain MIT 9303), this protein is tRNA N6-adenosine threonylcarbamoyltransferase.